Here is a 137-residue protein sequence, read N- to C-terminus: Putative pre-16S rRNA nuclease (137 aa).

It belongs to the YqgF nuclease family.

The protein resides in the cytoplasm. In terms of biological role, could be a nuclease involved in processing of the 5'-end of pre-16S rRNA. This Anaeromyxobacter dehalogenans (strain 2CP-1 / ATCC BAA-258) protein is Putative pre-16S rRNA nuclease.